The primary structure comprises 87 residues: DNA-directed RNA polymerase subunit Rpo5 (87 aa).

This sequence belongs to the archaeal Rpo5/eukaryotic RPB5 RNA polymerase subunit family. Part of the RNA polymerase complex.

The protein resides in the cytoplasm. It carries out the reaction RNA(n) + a ribonucleoside 5'-triphosphate = RNA(n+1) + diphosphate. Its function is as follows. DNA-dependent RNA polymerase (RNAP) catalyzes the transcription of DNA into RNA using the four ribonucleoside triphosphates as substrates. This is DNA-directed RNA polymerase subunit Rpo5 from Thermoplasma volcanium (strain ATCC 51530 / DSM 4299 / JCM 9571 / NBRC 15438 / GSS1).